Reading from the N-terminus, the 151-residue chain is uncharacterized protein (151 aa).

This is an uncharacterized protein from Escherichia coli.